The sequence spans 235 residues: Derlin-3 (235 aa).

The Cytoplasmic segment spans residues 1-22 (MAWQGLAAEFLQVPAVTRAYTA). Residues 23 to 43 (ACVLTTAAVQLELLSPFQLYF) form a helical membrane-spanning segment. Topologically, residues 44 to 58 (NPHLVFRKFQVWRLV) are lumenal. Residues 59-79 (TNFLFFGPLGFSFFFNMLFVF) traverse the membrane as a helical segment. Residues 80–98 (RYCRMLEEGSFRGRTADFV) lie on the Cytoplasmic side of the membrane. The helical transmembrane segment at 99-119 (FMFLFGGVLMTLLGLLGSLFF) threads the bilayer. Residues 120 to 157 (LGQALMAMLVYVWSRRSPRVRVNFFGLLTFQAPFLPWA) lie on the Lumenal side of the membrane. A helical membrane pass occupies residues 158 to 178 (LMGFSLLLGNSILVDLLGIAV). Over 179 to 235 (GHIYYFLEDVFPNQPGGKRLLQTPGFLKLLLDAPAEDPNYLPLPEEQPGPHLPPPQQ) the chain is Cytoplasmic. The segment at 216–235 (PNYLPLPEEQPGPHLPPPQQ) is disordered. Pro residues predominate over residues 223–235 (EEQPGPHLPPPQQ).

It belongs to the derlin family. In terms of assembly, forms homo- and heterooligomers with DERL2 and, to a lesser extent, with DERL1. Interacts with VCP and EDEM1. Interacts with SELENOK and SELENOS. Interacts with the signal recognition particle/SRP and the SRP receptor; in the process of endoplasmic reticulum stress-induced pre-emptive quality control. In terms of tissue distribution, unlike DERL1 and DERL2, restricted to several tissues. Expressed at high levels in placenta, pancreas, spleen and small intestine.

The protein localises to the endoplasmic reticulum membrane. Its function is as follows. Functional component of endoplasmic reticulum-associated degradation (ERAD) for misfolded lumenal glycoproteins, but not that of misfolded nonglycoproteins. May act by forming a channel that allows the retrotranslocation of misfolded glycoproteins into the cytosol where they are ubiquitinated and degraded by the proteasome. May mediate the interaction between VCP and the misfolded glycoproteins. May be involved in endoplasmic reticulum stress-induced pre-emptive quality control, a mechanism that selectively attenuates the translocation of newly synthesized proteins into the endoplasmic reticulum and reroutes them to the cytosol for proteasomal degradation. The chain is Derlin-3 from Homo sapiens (Human).